The primary structure comprises 338 residues: DNA-directed RNA polymerase subunit alpha (338 aa).

An alpha N-terminal domain (alpha-NTD) region spans residues 1–234; it reads MIHKNWAELI…DQLGIFVNFE (234 aa). The tract at residues 250 to 338 is alpha C-terminal domain (alpha-CTD); the sequence is FNPLLLKKVD…DLAKKFEDSF (89 aa).

Belongs to the RNA polymerase alpha chain family. In terms of assembly, homodimer. The RNAP catalytic core consists of 2 alpha, 1 beta, 1 beta' and 1 omega subunit. When a sigma factor is associated with the core the holoenzyme is formed, which can initiate transcription.

The catalysed reaction is RNA(n) + a ribonucleoside 5'-triphosphate = RNA(n+1) + diphosphate. DNA-dependent RNA polymerase catalyzes the transcription of DNA into RNA using the four ribonucleoside triphosphates as substrates. In Roseobacter denitrificans (strain ATCC 33942 / OCh 114) (Erythrobacter sp. (strain OCh 114)), this protein is DNA-directed RNA polymerase subunit alpha.